The chain runs to 186 residues: Large ribosomal subunit protein uL5 (186 aa).

It belongs to the universal ribosomal protein uL5 family. Part of the 50S ribosomal subunit; part of the 5S rRNA/L5/L18/L25 subcomplex. Contacts the 5S rRNA and the P site tRNA. Forms a bridge to the 30S subunit in the 70S ribosome.

In terms of biological role, this is one of the proteins that bind and probably mediate the attachment of the 5S RNA into the large ribosomal subunit, where it forms part of the central protuberance. In the 70S ribosome it contacts protein S13 of the 30S subunit (bridge B1b), connecting the 2 subunits; this bridge is implicated in subunit movement. Contacts the P site tRNA; the 5S rRNA and some of its associated proteins might help stabilize positioning of ribosome-bound tRNAs. The chain is Large ribosomal subunit protein uL5 from Jannaschia sp. (strain CCS1).